Consider the following 293-residue polypeptide: Histamine N-methyltransferase A (293 aa).

Residue Glu28 coordinates substrate. 5 residues coordinate S-adenosyl-L-methionine: Gly60, Glu89, Gln94, Ser120, and Ile142. Residue Asn283 coordinates substrate.

This sequence belongs to the class I-like SAM-binding methyltransferase superfamily. HNMT family. In terms of assembly, monomer.

It is found in the cytoplasm. The enzyme catalyses histamine + S-adenosyl-L-methionine = N(tau)-methylhistamine + S-adenosyl-L-homocysteine + H(+). In terms of biological role, inactivates histamine by N-methylation. Plays an important role in degrading histamine and in regulating the airway response to histamine. The protein is Histamine N-methyltransferase A (hnmt-a) of Xenopus laevis (African clawed frog).